A 225-amino-acid polypeptide reads, in one-letter code: Phosphoserine phosphatase (225 aa).

Methionine 1 bears the N-acetylmethionine mark. The active-site Nucleophile is aspartate 20. Mg(2+) contacts are provided by aspartate 20 and aspartate 22. An L-serine-binding site is contributed by 20–22 (DVD). Aspartate 22 functions as the Proton donor in the catalytic mechanism. Methionine 52 provides a ligand contact to O-phospho-L-serine. Phosphate is bound at residue glycine 53. Residues 109–111 (SGG) and lysine 158 each bind L-serine. Residues 109-111 (SGG) and lysine 158 each bind O-phospho-L-serine. Aspartate 179 lines the Mg(2+) pocket. Threonine 182 is a binding site for O-phospho-L-serine. Threonine 182 is a phosphate binding site.

The protein belongs to the HAD-like hydrolase superfamily. SerB family. Homodimer. Mg(2+) is required as a cofactor.

Its subcellular location is the cytoplasm. The protein localises to the cytosol. The enzyme catalyses O-phospho-L-serine + H2O = L-serine + phosphate. The catalysed reaction is O-phospho-D-serine + H2O = D-serine + phosphate. It participates in amino-acid biosynthesis; L-serine biosynthesis; L-serine from 3-phospho-D-glycerate: step 3/3. Inhibited by calcium ions. In terms of biological role, catalyzes the last irreversible step in the biosynthesis of L-serine from carbohydrates, the dephosphorylation of O-phospho-L-serine to L-serine. L-serine can then be used in protein synthesis, to produce other amino acids, in nucleotide metabolism or in glutathione synthesis, or can be racemized to D-serine, a neuromodulator. May also act on O-phospho-D-serine. In Homo sapiens (Human), this protein is Phosphoserine phosphatase.